We begin with the raw amino-acid sequence, 361 residues long: Peptide chain release factor 1 (361 aa).

Gln-237 carries the post-translational modification N5-methylglutamine. A disordered region spans residues 287 to 306; sequence KRAAEEASTRKSLVGSGDRS.

The protein belongs to the prokaryotic/mitochondrial release factor family. Post-translationally, methylated by PrmC. Methylation increases the termination efficiency of RF1.

The protein resides in the cytoplasm. Its function is as follows. Peptide chain release factor 1 directs the termination of translation in response to the peptide chain termination codons UAG and UAA. The polypeptide is Peptide chain release factor 1 (Alteromonas mediterranea (strain DSM 17117 / CIP 110805 / LMG 28347 / Deep ecotype)).